Here is a 337-residue protein sequence, read N- to C-terminus: tRNA N6-adenosine threonylcarbamoyltransferase (337 aa).

Residues His111 and His115 each contribute to the Fe cation site. Residues 134–138 (LVSGG), Asp167, Gly180, and Asn272 each bind substrate. Fe cation is bound at residue Asp300.

This sequence belongs to the KAE1 / TsaD family. Fe(2+) is required as a cofactor.

The protein resides in the cytoplasm. It carries out the reaction L-threonylcarbamoyladenylate + adenosine(37) in tRNA = N(6)-L-threonylcarbamoyladenosine(37) in tRNA + AMP + H(+). Functionally, required for the formation of a threonylcarbamoyl group on adenosine at position 37 (t(6)A37) in tRNAs that read codons beginning with adenine. Is involved in the transfer of the threonylcarbamoyl moiety of threonylcarbamoyl-AMP (TC-AMP) to the N6 group of A37, together with TsaE and TsaB. TsaD likely plays a direct catalytic role in this reaction. This is tRNA N6-adenosine threonylcarbamoyltransferase from Klebsiella pneumoniae (strain 342).